The following is an 827-amino-acid chain: Translation initiation factor IF-2 (827 aa).

Residues A49–E205 are disordered. Basic and acidic residues-rich tracts occupy residues L50–A73, R96–Q106, P116–E129, R137–G150, F157–R168, and E182–E205. Residues P326–K495 form the tr-type G domain. The tract at residues G335–T342 is G1. G335–T342 contacts GTP. Residues G360 to H364 are G2. Residues D381–G384 form a G3 region. Residues D381–H385 and N435–D438 each bind GTP. A G4 region spans residues N435 to D438. The G5 stretch occupies residues S471–L473.

This sequence belongs to the TRAFAC class translation factor GTPase superfamily. Classic translation factor GTPase family. IF-2 subfamily.

The protein resides in the cytoplasm. One of the essential components for the initiation of protein synthesis. Protects formylmethionyl-tRNA from spontaneous hydrolysis and promotes its binding to the 30S ribosomal subunits. Also involved in the hydrolysis of GTP during the formation of the 70S ribosomal complex. In Carboxydothermus hydrogenoformans (strain ATCC BAA-161 / DSM 6008 / Z-2901), this protein is Translation initiation factor IF-2.